Here is a 291-residue protein sequence, read N- to C-terminus: DNA repair protein RecO (291 aa).

Belongs to the RecO family.

Involved in DNA repair and RecF pathway recombination. The protein is DNA repair protein RecO of Cupriavidus pinatubonensis (strain JMP 134 / LMG 1197) (Cupriavidus necator (strain JMP 134)).